Consider the following 409-residue polypeptide: Tryptophan synthase beta chain (409 aa).

Lys-98 is subject to N6-(pyridoxal phosphate)lysine.

The protein belongs to the TrpB family. As to quaternary structure, tetramer of two alpha and two beta chains. The cofactor is pyridoxal 5'-phosphate.

The catalysed reaction is (1S,2R)-1-C-(indol-3-yl)glycerol 3-phosphate + L-serine = D-glyceraldehyde 3-phosphate + L-tryptophan + H2O. It participates in amino-acid biosynthesis; L-tryptophan biosynthesis; L-tryptophan from chorismate: step 5/5. Functionally, the beta subunit is responsible for the synthesis of L-tryptophan from indole and L-serine. The polypeptide is Tryptophan synthase beta chain (trpB) (Cereibacter sphaeroides (strain ATCC 17023 / DSM 158 / JCM 6121 / CCUG 31486 / LMG 2827 / NBRC 12203 / NCIMB 8253 / ATH 2.4.1.) (Rhodobacter sphaeroides)).